We begin with the raw amino-acid sequence, 27 residues long: GYEDEDEDRPFYALGLGKRPRTYSFGL.

At L27 the chain carries Leucine amide.

Belongs to the allatostatin family.

It is found in the secreted. Functionally, may act as a neurotransmitter or neuromodulator. The sequence is that of Carcinustatin-20 from Carcinus maenas (Common shore crab).